The sequence spans 384 residues: Queuine tRNA-ribosyltransferase (384 aa).

The active-site Proton acceptor is Asp93. Substrate-binding positions include Asp93 to Phe97, Asp147, Gln202, and Gly229. Residues Gly260–Glu266 form an RNA binding region. Asp279 (nucleophile) is an active-site residue. Residues Thr284–Arg288 form an RNA binding; important for wobble base 34 recognition region. Residues Cys317, Cys319, Cys322, and His348 each contribute to the Zn(2+) site.

This sequence belongs to the queuine tRNA-ribosyltransferase family. As to quaternary structure, homodimer. Within each dimer, one monomer is responsible for RNA recognition and catalysis, while the other monomer binds to the replacement base PreQ1. Zn(2+) is required as a cofactor.

It catalyses the reaction 7-aminomethyl-7-carbaguanine + guanosine(34) in tRNA = 7-aminomethyl-7-carbaguanosine(34) in tRNA + guanine. The protein operates within tRNA modification; tRNA-queuosine biosynthesis. Catalyzes the base-exchange of a guanine (G) residue with the queuine precursor 7-aminomethyl-7-deazaguanine (PreQ1) at position 34 (anticodon wobble position) in tRNAs with GU(N) anticodons (tRNA-Asp, -Asn, -His and -Tyr). Catalysis occurs through a double-displacement mechanism. The nucleophile active site attacks the C1' of nucleotide 34 to detach the guanine base from the RNA, forming a covalent enzyme-RNA intermediate. The proton acceptor active site deprotonates the incoming PreQ1, allowing a nucleophilic attack on the C1' of the ribose to form the product. After dissociation, two additional enzymatic reactions on the tRNA convert PreQ1 to queuine (Q), resulting in the hypermodified nucleoside queuosine (7-(((4,5-cis-dihydroxy-2-cyclopenten-1-yl)amino)methyl)-7-deazaguanosine). The chain is Queuine tRNA-ribosyltransferase from Koribacter versatilis (strain Ellin345).